Consider the following 154-residue polypeptide: Ribosome maturation factor RimP (154 aa).

Belongs to the RimP family.

The protein resides in the cytoplasm. Required for maturation of 30S ribosomal subunits. The protein is Ribosome maturation factor RimP of Flavobacterium psychrophilum (strain ATCC 49511 / DSM 21280 / CIP 103535 / JIP02/86).